Reading from the N-terminus, the 155-residue chain is Protein archease-like (155 aa).

Residues aspartate 26, aspartate 154, and isoleucine 155 each contribute to the Ca(2+) site.

This sequence belongs to the archease family.

Functionally, component of the tRNA-splicing ligase complex required to facilitate the enzymatic turnover of catalytic subunit RtcB. The chain is Protein archease-like from Caenorhabditis briggsae.